The sequence spans 359 residues: Outer membrane protein P5 (359 aa).

The first 21 residues, 1-21, serve as a signal peptide directing secretion; it reads MKKTAIALVVAGLAAASVAQA. 8 consecutive transmembrane segments (beta stranded) span residues 27–37, 64–75, 83–91, 110–121, 126–134, 164–173, 178–185, and 211–219; these read TFYAGVKAGQG, TFTYGVFGGYQI, LAAELGYDD, HGAYLSLKGSYE, LDVYGKAGV, GLFAVGAEYA, LAVRLEYQ, and CINAGISYR. One can recognise an OmpA-like domain in the interval 233-359; the sequence is MVSKTFSLNS…RVEIAVNGTK (127 aa). A disulfide bridge connects residues Cys-332 and Cys-344.

Belongs to the outer membrane OOP (TC 1.B.6) superfamily. OmpA family. In terms of assembly, monomer and homodimer.

Its subcellular location is the cell outer membrane. The protein resides in the fimbrium. In terms of biological role, acts as a fimbriae subunit, allowing adhesion to host cells. Functionally, with TolR probably plays a role in maintaining the position of the peptidoglycan cell wall in the periplasm. Acts as a porin with low permeability that allows slow penetration of small solutes; an internal gate slows down solute passage. This chain is Outer membrane protein P5, found in Haemophilus influenzae.